A 91-amino-acid chain; its full sequence is Elongation factor 1-beta (91 aa).

Belongs to the EF-1-beta/EF-1-delta family.

Promotes the exchange of GDP for GTP in EF-1-alpha/GDP, thus allowing the regeneration of EF-1-alpha/GTP that could then be used to form the ternary complex EF-1-alpha/GTP/AAtRNA. The protein is Elongation factor 1-beta of Sulfurisphaera tokodaii (strain DSM 16993 / JCM 10545 / NBRC 100140 / 7) (Sulfolobus tokodaii).